We begin with the raw amino-acid sequence, 589 residues long: MRLWQWSIAVAICLVMVTEARLRRHHRKRRFVSSNFDEFYCGESAHAQSQFEEERESNSSKVSSVHSTQFNWGLDNTICIKLQNVVHVLKYERLEQRYPIENSYTFSVPLIDTNCKCHCYGFGTNDVCNVEKYADDRNCTTSSEFPTCYTKYHPAVEPLDCPVTSIPAKACCDIKLKPRDGRMFRAVKLQQPINDMIISHSIFANNSGKMMKVLGPDEFRINLLKGKEQFELTEYHRISVQLVASSPQQQLREGMYYFPEENHNDLREGKINEITESDLDKLGWYRRVGNDWQVATSGLLLRNAHKVVIKNCKGQVHMDQFSGTKNFVLRGTQYNDTYNERRVSDNNFVRSVKVDESSREITIVHEHGTAAQVSLKTDTRPNLTKSQSLLANFTGSITLDHDGNRMLNVTFFGVKGTVHIKMYVNDRKLIATFACTAQFGTSLKDDGSRISLPSTINQAQWVCILPDEQPTKSEICKWIPYEEKAMRTPRQEQSWSKGHSPCSQAECNSLKSGVSDLFPWIMNFDYFMAHGGDFTEWLKIGIHIVIAVGLLLLLILLFTKCLVPLACCSLSIPFKNRNKKKKKKNSSDY.

The first 20 residues, 1 to 20 (MRLWQWSIAVAICLVMVTEA), serve as a signal peptide directing secretion. Topologically, residues 21 to 537 (RLRRHHRKRR…MAHGGDFTEW (517 aa)) are extracellular. N-linked (GlcNAc...) asparagine glycosylation is found at asparagine 58, asparagine 138, asparagine 205, asparagine 335, asparagine 382, asparagine 392, and asparagine 408. A helical membrane pass occupies residues 538–558 (LKIGIHIVIAVGLLLLLILLF). The Cytoplasmic portion of the chain corresponds to 559 to 589 (TKCLVPLACCSLSIPFKNRNKKKKKKNSSDY).

The protein belongs to the EFF/AFF cell fusogen family. Expressed in amphid sheath cells.

Its subcellular location is the cell membrane. It is found in the apical cell membrane. Functionally, required for cell fusion events during development including the fusion of anchor cells (AC), vulval A and vulval D rings, and late epidermal seam cells. Required for amphid sheath cell fusion induced by entry into dauer stage. The chain is Cell fusion protein aff-1 from Caenorhabditis elegans.